The primary structure comprises 391 residues: tRNA-specific 2-thiouridylase MnmA (391 aa).

ATP is bound by residues 9 to 16 (GMSGGVDS) and M35. An interaction with target base in tRNA region spans residues 95–97 (NPD). Residue C100 is the Nucleophile of the active site. C100 and C196 are oxidised to a cystine. G124 contacts ATP. The tract at residues 146 to 148 (KDQ) is interaction with tRNA. C196 (cysteine persulfide intermediate) is an active-site residue. The interaction with tRNA stretch occupies residues 308-309 (RY). Polar residues predominate over residues 372–382 (TGQPGQATSTG). The tract at residues 372 to 391 (TGQPGQATSTGHAPALAEAR) is disordered.

It belongs to the MnmA/TRMU family.

Its subcellular location is the cytoplasm. The catalysed reaction is S-sulfanyl-L-cysteinyl-[protein] + uridine(34) in tRNA + AH2 + ATP = 2-thiouridine(34) in tRNA + L-cysteinyl-[protein] + A + AMP + diphosphate + H(+). Catalyzes the 2-thiolation of uridine at the wobble position (U34) of tRNA, leading to the formation of s(2)U34. This Burkholderia cenocepacia (strain ATCC BAA-245 / DSM 16553 / LMG 16656 / NCTC 13227 / J2315 / CF5610) (Burkholderia cepacia (strain J2315)) protein is tRNA-specific 2-thiouridylase MnmA.